A 435-amino-acid chain; its full sequence is Trigger factor (435 aa).

The 86-residue stretch at 161-246 folds into the PPIase FKBP-type domain; it reads DDQVTLDFEG…LTKVEEQILP (86 aa).

It belongs to the FKBP-type PPIase family. Tig subfamily.

The protein resides in the cytoplasm. It catalyses the reaction [protein]-peptidylproline (omega=180) = [protein]-peptidylproline (omega=0). In terms of biological role, involved in protein export. Acts as a chaperone by maintaining the newly synthesized protein in an open conformation. Functions as a peptidyl-prolyl cis-trans isomerase. The protein is Trigger factor of Psychromonas ingrahamii (strain DSM 17664 / CCUG 51855 / 37).